A 283-amino-acid polypeptide reads, in one-letter code: Arsenite methyltransferase (283 aa).

The protein belongs to the methyltransferase superfamily. Arsenite methyltransferase family.

It catalyses the reaction arsenic triglutathione + [thioredoxin]-dithiol + S-adenosyl-L-methionine + 2 H2O = methylarsonous acid + [thioredoxin]-disulfide + 3 glutathione + S-adenosyl-L-homocysteine + H(+). The enzyme catalyses arsenic triglutathione + 2 [thioredoxin]-dithiol + 2 S-adenosyl-L-methionine + H2O = dimethylarsinous acid + 2 [thioredoxin]-disulfide + 3 glutathione + 2 S-adenosyl-L-homocysteine + 2 H(+). It carries out the reaction arsenic triglutathione + 3 [thioredoxin]-dithiol + 3 S-adenosyl-L-methionine = trimethylarsine + 3 [thioredoxin]-disulfide + 3 glutathione + 3 S-adenosyl-L-homocysteine + 3 H(+). In terms of biological role, catalyzes the transfer of a methyl group from AdoMet to arsenite, producing methylated arsenicals. Involved in the conversion of As(III) to a number of di- and trimethylated species, with trimethylarsine as the end product. Reduces the arsenic toxicity in the cell and may contribute to the global arsenic cycling. The sequence is that of Arsenite methyltransferase from Rhodopseudomonas palustris (strain ATCC BAA-98 / CGA009).